Consider the following 77-residue polypeptide: RNA-binding protein Hfq (77 aa).

Residues 10–70 enclose the Sm domain; that stretch reads DAFLNHVRKA…ISTIMPGQPI (61 aa).

The protein belongs to the Hfq family. In terms of assembly, homohexamer.

In terms of biological role, RNA chaperone that binds small regulatory RNA (sRNAs) and mRNAs to facilitate mRNA translational regulation in response to envelope stress, environmental stress and changes in metabolite concentrations. Also binds with high specificity to tRNAs. This chain is RNA-binding protein Hfq, found in Cereibacter sphaeroides (strain ATCC 17029 / ATH 2.4.9) (Rhodobacter sphaeroides).